A 275-amino-acid chain; its full sequence is Myb/SANT-like DNA-binding domain-containing protein 3 (275 aa).

Residues 13–78 form the Myb-like domain; it reads FSELEKSILL…QLKKCWENIK (66 aa). A phosphoserine mark is found at Ser-96 and Ser-98. Residue Lys-154 forms a Glycyl lysine isopeptide (Lys-Gly) (interchain with G-Cter in SUMO2) linkage. The stretch at 211-247 forms a coiled coil; it reads QLIQMNEVHVAKIQQIERECEMAEEEHRIKMEVLNKK. Ser-274 carries the post-translational modification Phosphoserine.

It belongs to the MSANTD3 family. In terms of tissue distribution, expressed in brain.

The polypeptide is Myb/SANT-like DNA-binding domain-containing protein 3 (MSANTD3) (Homo sapiens (Human)).